Here is a 489-residue protein sequence, read N- to C-terminus: Diaminopimelate decarboxylase 2, chloroplastic (489 aa).

The transit peptide at 1-50 (MAAVTQFLSQPSSIRGTLNQYQLNQTSLSRIPFLSLKSTLKPLKRLSVKA) directs the protein to the chloroplast. Residue alanine 51 is modified to N-acetylalanine. N6-(pyridoxal phosphate)lysine is present on lysine 130. Residues glycine 309 and 345–348 (EPGR) contribute to the pyridoxal 5'-phosphate site. Positions 348, 384, and 388 each coordinate substrate. Residue cysteine 416 is the Proton donor of the active site. The substrate site is built by glutamate 417 and tyrosine 445. Tyrosine 445 provides a ligand contact to pyridoxal 5'-phosphate.

Belongs to the Orn/Lys/Arg decarboxylase class-II family. LysA subfamily. In terms of assembly, homodimer. Requires pyridoxal 5'-phosphate as cofactor.

Its subcellular location is the plastid. It localises to the chloroplast. The enzyme catalyses meso-2,6-diaminopimelate + H(+) = L-lysine + CO2. It participates in amino-acid biosynthesis; L-lysine biosynthesis via DAP pathway; L-lysine from DL-2,6-diaminopimelate: step 1/1. In terms of biological role, specifically catalyzes the decarboxylation of meso-diaminopimelate (meso-DAP) to L-lysine. The protein is Diaminopimelate decarboxylase 2, chloroplastic (LYSA2) of Arabidopsis thaliana (Mouse-ear cress).